A 409-amino-acid polypeptide reads, in one-letter code: Dual-specificity RNA methyltransferase RlmN (409 aa).

The active-site Proton acceptor is Glu121. The Radical SAM core domain maps to 127-376 (EEGRGTLCIS…IRTPRGRDIL (250 aa)). A disulfide bridge connects residues Cys134 and Cys379. Cys141, Cys145, and Cys148 together coordinate [4Fe-4S] cluster. Residues 205-206 (GE), Ser237, 259-261 (SLH), and Asn336 contribute to the S-adenosyl-L-methionine site. The active-site S-methylcysteine intermediate is Cys379.

Belongs to the radical SAM superfamily. RlmN family. [4Fe-4S] cluster is required as a cofactor.

It is found in the cytoplasm. The catalysed reaction is adenosine(2503) in 23S rRNA + 2 reduced [2Fe-2S]-[ferredoxin] + 2 S-adenosyl-L-methionine = 2-methyladenosine(2503) in 23S rRNA + 5'-deoxyadenosine + L-methionine + 2 oxidized [2Fe-2S]-[ferredoxin] + S-adenosyl-L-homocysteine. It catalyses the reaction adenosine(37) in tRNA + 2 reduced [2Fe-2S]-[ferredoxin] + 2 S-adenosyl-L-methionine = 2-methyladenosine(37) in tRNA + 5'-deoxyadenosine + L-methionine + 2 oxidized [2Fe-2S]-[ferredoxin] + S-adenosyl-L-homocysteine. Functionally, specifically methylates position 2 of adenine 2503 in 23S rRNA and position 2 of adenine 37 in tRNAs. m2A2503 modification seems to play a crucial role in the proofreading step occurring at the peptidyl transferase center and thus would serve to optimize ribosomal fidelity. The protein is Dual-specificity RNA methyltransferase RlmN of Agrobacterium fabrum (strain C58 / ATCC 33970) (Agrobacterium tumefaciens (strain C58)).